The primary structure comprises 114 residues: Nucleoid-associated protein PCC8801_2554 (114 aa).

Belongs to the YbaB/EbfC family. Homodimer.

It localises to the cytoplasm. The protein localises to the nucleoid. Functionally, binds to DNA and alters its conformation. May be involved in regulation of gene expression, nucleoid organization and DNA protection. The polypeptide is Nucleoid-associated protein PCC8801_2554 (Rippkaea orientalis (strain PCC 8801 / RF-1) (Cyanothece sp. (strain PCC 8801))).